Here is a 388-residue protein sequence, read N- to C-terminus: Chorismate synthase (388 aa).

NADP(+)-binding residues include R39 and R45. Residues 130-132 (RSS), 251-252 (NA), G296, 311-315 (KPIPT), and R337 contribute to the FMN site.

Belongs to the chorismate synthase family. As to quaternary structure, homotetramer. FMNH2 is required as a cofactor.

It catalyses the reaction 5-O-(1-carboxyvinyl)-3-phosphoshikimate = chorismate + phosphate. It functions in the pathway metabolic intermediate biosynthesis; chorismate biosynthesis; chorismate from D-erythrose 4-phosphate and phosphoenolpyruvate: step 7/7. Catalyzes the anti-1,4-elimination of the C-3 phosphate and the C-6 proR hydrogen from 5-enolpyruvylshikimate-3-phosphate (EPSP) to yield chorismate, which is the branch point compound that serves as the starting substrate for the three terminal pathways of aromatic amino acid biosynthesis. This reaction introduces a second double bond into the aromatic ring system. The sequence is that of Chorismate synthase from Streptococcus agalactiae serotype Ia (strain ATCC 27591 / A909 / CDC SS700).